Here is a 319-residue protein sequence, read N- to C-terminus: tRNA pseudouridine synthase B (319 aa).

D49 serves as the catalytic Nucleophile.

It belongs to the pseudouridine synthase TruB family. Type 1 subfamily.

It catalyses the reaction uridine(55) in tRNA = pseudouridine(55) in tRNA. Its function is as follows. Responsible for synthesis of pseudouridine from uracil-55 in the psi GC loop of transfer RNAs. The chain is tRNA pseudouridine synthase B from Bartonella henselae (strain ATCC 49882 / DSM 28221 / CCUG 30454 / Houston 1) (Rochalimaea henselae).